The following is a 270-amino-acid chain: Urease accessory protein UreD (270 aa).

The protein belongs to the UreD family. As to quaternary structure, ureD, UreF and UreG form a complex that acts as a GTP-hydrolysis-dependent molecular chaperone, activating the urease apoprotein by helping to assemble the nickel containing metallocenter of UreC. The UreE protein probably delivers the nickel.

It localises to the cytoplasm. Functionally, required for maturation of urease via the functional incorporation of the urease nickel metallocenter. This chain is Urease accessory protein UreD, found in Beijerinckia indica subsp. indica (strain ATCC 9039 / DSM 1715 / NCIMB 8712).